The primary structure comprises 325 residues: Tetraacyldisaccharide 4'-kinase (325 aa).

Position 55–62 (55–62 (TAGGNGKT)) interacts with ATP.

It belongs to the LpxK family.

The enzyme catalyses a lipid A disaccharide + ATP = a lipid IVA + ADP + H(+). It functions in the pathway glycolipid biosynthesis; lipid IV(A) biosynthesis; lipid IV(A) from (3R)-3-hydroxytetradecanoyl-[acyl-carrier-protein] and UDP-N-acetyl-alpha-D-glucosamine: step 6/6. Transfers the gamma-phosphate of ATP to the 4'-position of a tetraacyldisaccharide 1-phosphate intermediate (termed DS-1-P) to form tetraacyldisaccharide 1,4'-bis-phosphate (lipid IVA). In Salmonella agona (strain SL483), this protein is Tetraacyldisaccharide 4'-kinase.